A 256-amino-acid chain; its full sequence is uncharacterized protein (256 aa).

Residues 1 to 23 are disordered; it reads MIPPCENAPHIIYHESQRGTRDR. The segment covering 12 to 23 has biased composition (basic and acidic residues); sequence IYHESQRGTRDR.

This is an uncharacterized protein from Homo sapiens (Human).